The sequence spans 468 residues: Procollagen C-endopeptidase enhancer 1 (468 aa).

Positions 1-24 are cleaved as a signal peptide; that stretch reads MLPAALTSLLGPFLLAWVLPLARG. Residue asparagine 28 is glycosylated (N-linked (GlcNAc...) asparagine). Disulfide bonds link cysteine 36–cysteine 62, cysteine 89–cysteine 111, cysteine 158–cysteine 185, and cysteine 212–cysteine 235. CUB domains lie at 36 to 148 and 158 to 272; these read CGGD…YSGR and CGGR…YRTL. Phosphothreonine is present on threonine 41. The residue at position 49 (serine 49) is a Phosphoserine. Positions 271 to 341 are disordered; it reads TLPRDAVEKE…VAPDAPSITC (71 aa). A compositionally biased stretch (basic and acidic residues) spans 272–281; the sequence is LPRDAVEKES. Disulfide bonds link cysteine 341–cysteine 409 and cysteine 356–cysteine 460. The 120-residue stretch at 341–460 folds into the NTR domain; it reads CPKQYKRSGT…ILSNLSKRKC (120 aa). N-linked (GlcNAc...) asparagine glycosylation occurs at asparagine 454.

Interacts with EFEMP2. As to expression, expressed at highest levels in collagen-rich tissues, especially tendon. Also expressed in cornea and sterna.

It localises to the secreted. In terms of biological role, binds to the C-terminal propeptide of type I procollagen and enhances procollagen C-proteinase activity. The chain is Procollagen C-endopeptidase enhancer 1 (Pcolce) from Rattus norvegicus (Rat).